We begin with the raw amino-acid sequence, 441 residues long: Ribulose bisphosphate carboxylase large chain (441 aa).

At K5 the chain carries N6,N6,N6-trimethyllysine. Substrate is bound by residues N114 and T164. The active-site Proton acceptor is K166. K168 lines the substrate pocket. Mg(2+)-binding residues include K192, D194, and E195. K192 is modified (N6-carboxylysine). Catalysis depends on H285, which acts as the Proton acceptor. Residues R286, H318, and S370 each contribute to the substrate site.

It belongs to the RuBisCO large chain family. Type I subfamily. In terms of assembly, heterohexadecamer of 8 large chains and 8 small chains; disulfide-linked. The disulfide link is formed within the large subunit homodimers. It depends on Mg(2+) as a cofactor. The disulfide bond which can form in the large chain dimeric partners within the hexadecamer appears to be associated with oxidative stress and protein turnover.

It localises to the plastid. The protein resides in the chloroplast. It catalyses the reaction 2 (2R)-3-phosphoglycerate + 2 H(+) = D-ribulose 1,5-bisphosphate + CO2 + H2O. The enzyme catalyses D-ribulose 1,5-bisphosphate + O2 = 2-phosphoglycolate + (2R)-3-phosphoglycerate + 2 H(+). RuBisCO catalyzes two reactions: the carboxylation of D-ribulose 1,5-bisphosphate, the primary event in carbon dioxide fixation, as well as the oxidative fragmentation of the pentose substrate in the photorespiration process. Both reactions occur simultaneously and in competition at the same active site. This Glycyrrhiza echinata (Licorice) protein is Ribulose bisphosphate carboxylase large chain.